The primary structure comprises 477 residues: MSSFETTIGLEVHVELKTKSKAFSLSPVNFGDPANENTNVIDWGYPGVLPSANKGALESGMMAALALNAQITRDVHWDRKNYFYPDNPKSYQVTQQQTPIGHDGYVEIKKEDGTSKRIGIKELHVEEDAGKNSHSGKGYSLVDLNRQGTPLVEIVSQPNISSPDEAYLYLEKLRQLIQFTGISDVKMQEGSMRVDINISVRPIGAEKYGTKVEIKNVNSFQYAKNALAYEEQRQRDELMAGHIIGQETRRFDEPTKSTILMRVKEGADDYRYFPEPDLPVIHVSDEWIKAVKSSLPETADDRIARYINKFALSKKEAAVLTQTLEMANFYDQVVDDGADPKRTANYLIGDVNAYLNETQLDLQDTKLTPGHLSGMIKLIDNGTISTKQAKKVFTAITDGEEPKAYVEKNGLVQLSDPNKLTPIINQILDDNQQSIDDFKGGKDRTIGYLTGQVMKKTHGNANPKIVHEILLAELKKR.

This sequence belongs to the GatB/GatE family. GatB subfamily. Heterotrimer of A, B and C subunits.

It catalyses the reaction L-glutamyl-tRNA(Gln) + L-glutamine + ATP + H2O = L-glutaminyl-tRNA(Gln) + L-glutamate + ADP + phosphate + H(+). It carries out the reaction L-aspartyl-tRNA(Asn) + L-glutamine + ATP + H2O = L-asparaginyl-tRNA(Asn) + L-glutamate + ADP + phosphate + 2 H(+). Allows the formation of correctly charged Asn-tRNA(Asn) or Gln-tRNA(Gln) through the transamidation of misacylated Asp-tRNA(Asn) or Glu-tRNA(Gln) in organisms which lack either or both of asparaginyl-tRNA or glutaminyl-tRNA synthetases. The reaction takes place in the presence of glutamine and ATP through an activated phospho-Asp-tRNA(Asn) or phospho-Glu-tRNA(Gln). The sequence is that of Aspartyl/glutamyl-tRNA(Asn/Gln) amidotransferase subunit B from Oenococcus oeni (strain ATCC BAA-331 / PSU-1).